The chain runs to 476 residues: MAAPGTPPPLAPETAGADSGGGSGEHRQLPELIRLKRNGGHLSEADIRNFVHALMDGRAQDTQIGAMLMAIRLQGMDLEETSVLTQALAESGQQLEWPKAWHQQLVDKHSTGGVGDKVSLVLAPALAACGCKVPMISGRSLGHTGGTLDKLESIPGFSVTQSPEQMLQILEEVGCCIVGQSEKLVPADGILYAARDVTATVDSVPLITASILSKKAVEGLSTLVVDVKFGGAAVFPDQEKARELAKMLVRVGMGLGLQVAAALTAMDNPLGRNVGHTLEVEEALLCLDGAGPPDLRDLVIRLGGAILWLSGQAETQDQGAARVAAALDDGSALHRFQLMLSAQGVDPGLARALCSGSPTQRRQLLPHARKQEELLSPADGIVECVRALPLACVLHELGAGRSRAGQPIRPGVGAELLVDVGQWLSRGTPWLRVHLDGPALSSQQRRTLLGALVLSDRAPFKAPSPFAELVLPPTTP.

Over residues Met-1–Ala-11 the composition is skewed to pro residues. Residues Met-1–His-26 are disordered. 2 positions are modified to phosphothreonine: Thr-6 and Thr-475.

Belongs to the thymidine/pyrimidine-nucleoside phosphorylase family. Homodimer.

It catalyses the reaction thymidine + phosphate = 2-deoxy-alpha-D-ribose 1-phosphate + thymine. It functions in the pathway pyrimidine metabolism; dTMP biosynthesis via salvage pathway; dTMP from thymine: step 1/2. Catalyzes the reversible phosphorolysis of thymidine. The produced molecules are then utilized as carbon and energy sources or in the rescue of pyrimidine bases for nucleotide synthesis. This chain is Thymidine phosphorylase (Tymp), found in Rattus norvegicus (Rat).